Here is a 608-residue protein sequence, read N- to C-terminus: Aspartate--tRNA(Asp/Asn) ligase (608 aa).

E187 contributes to the L-aspartate binding site. Residues 211–214 (QQFK) are aspartate. R233 and H461 together coordinate L-aspartate. ATP is bound at residue 233 to 235 (RDE). E495 contributes to the ATP binding site. R502 is a binding site for L-aspartate. Position 547–550 (547–550 (GLDR)) interacts with ATP.

Belongs to the class-II aminoacyl-tRNA synthetase family. Type 1 subfamily. As to quaternary structure, homodimer.

The protein localises to the cytoplasm. It catalyses the reaction tRNA(Asx) + L-aspartate + ATP = L-aspartyl-tRNA(Asx) + AMP + diphosphate. Its function is as follows. Aspartyl-tRNA synthetase with relaxed tRNA specificity since it is able to aspartylate not only its cognate tRNA(Asp) but also tRNA(Asn). Reaction proceeds in two steps: L-aspartate is first activated by ATP to form Asp-AMP and then transferred to the acceptor end of tRNA(Asp/Asn). This chain is Aspartate--tRNA(Asp/Asn) ligase, found in Chlorobium phaeobacteroides (strain BS1).